The following is a 198-amino-acid chain: Ribonuclease HII (198 aa).

The RNase H type-2 domain maps to Gly-14 to Leu-198. Residues Asp-20, Glu-21, and Asp-112 each coordinate a divalent metal cation.

This sequence belongs to the RNase HII family. Requires Mn(2+) as cofactor. Mg(2+) serves as cofactor.

Its subcellular location is the cytoplasm. The catalysed reaction is Endonucleolytic cleavage to 5'-phosphomonoester.. Its function is as follows. Endonuclease that specifically degrades the RNA of RNA-DNA hybrids. The sequence is that of Ribonuclease HII from Wolbachia pipientis wMel.